Reading from the N-terminus, the 357-residue chain is Arginine kinase (357 aa).

Ala2 is modified (N-acetylalanine). The Phosphagen kinase N-terminal domain maps to 9–91 (KLEEGFKKLQ…FDPIIEDYHK (83 aa)). 64 to 68 (GVGVY) provides a ligand contact to L-arginine. The Phosphagen kinase C-terminal domain maps to 119–356 (FVISTRVRCG…LELIKIEKEM (238 aa)). ATP-binding positions include 122–126 (STRVR) and His185. Glu225 is an L-arginine binding site. Arg229 is an ATP binding site. Cys271 is a binding site for L-arginine. ATP contacts are provided by residues 280 to 284 (RASVH) and 309 to 314 (RGTRGE). Glu314 is an L-arginine binding site.

Belongs to the ATP:guanido phosphotransferase family.

The enzyme catalyses L-arginine + ATP = N(omega)-phospho-L-arginine + ADP + H(+). The polypeptide is Arginine kinase (Pachygrapsus marmoratus (Marbled rock crab)).